The chain runs to 277 residues: Shikimate dehydrogenase (NADP(+)) (277 aa).

Shikimate is bound by residues 17–19 (SRS) and T64. Residue K68 is the Proton acceptor of the active site. The shikimate site is built by N88 and D103. Residues 128 to 132 (GAGGS) and L217 contribute to the NADP(+) site. Y219 is a binding site for shikimate. G240 serves as a coordination point for NADP(+).

This sequence belongs to the shikimate dehydrogenase family. Homodimer.

It catalyses the reaction shikimate + NADP(+) = 3-dehydroshikimate + NADPH + H(+). It functions in the pathway metabolic intermediate biosynthesis; chorismate biosynthesis; chorismate from D-erythrose 4-phosphate and phosphoenolpyruvate: step 4/7. Involved in the biosynthesis of the chorismate, which leads to the biosynthesis of aromatic amino acids. Catalyzes the reversible NADPH linked reduction of 3-dehydroshikimate (DHSA) to yield shikimate (SA). The sequence is that of Shikimate dehydrogenase (NADP(+)) from Afipia carboxidovorans (strain ATCC 49405 / DSM 1227 / KCTC 32145 / OM5) (Oligotropha carboxidovorans).